The sequence spans 274 residues: 2,3,4,5-tetrahydropyridine-2,6-dicarboxylate N-succinyltransferase (274 aa).

Substrate is bound by residues Arg106 and Asp143.

Belongs to the transferase hexapeptide repeat family. In terms of assembly, homotrimer.

It is found in the cytoplasm. It catalyses the reaction (S)-2,3,4,5-tetrahydrodipicolinate + succinyl-CoA + H2O = (S)-2-succinylamino-6-oxoheptanedioate + CoA. It functions in the pathway amino-acid biosynthesis; L-lysine biosynthesis via DAP pathway; LL-2,6-diaminopimelate from (S)-tetrahydrodipicolinate (succinylase route): step 1/3. This chain is 2,3,4,5-tetrahydropyridine-2,6-dicarboxylate N-succinyltransferase, found in Rickettsia conorii (strain ATCC VR-613 / Malish 7).